We begin with the raw amino-acid sequence, 426 residues long: GTPase Obg (426 aa).

The 158-residue stretch at 1 to 158 (MFVDEVEIKV…RSIRLELKLV (158 aa)) folds into the Obg domain. In terms of domain architecture, OBG-type G spans 159–330 (ADVGLIGFPN…LIYYTGDLLK (172 aa)). GTP is bound by residues 165–172 (GFPNVGKS), 190–194 (FTTLK), 212–215 (DIPG), 282–285 (NKID), and 311–313 (SAA). The Mg(2+) site is built by Ser172 and Thr192. The OCT domain occupies 349-426 (DFADEEENIV…IGPMEFEYME (78 aa)).

The protein belongs to the TRAFAC class OBG-HflX-like GTPase superfamily. OBG GTPase family. As to quaternary structure, monomer. It depends on Mg(2+) as a cofactor.

Its subcellular location is the cytoplasm. Its function is as follows. An essential GTPase which binds GTP, GDP and possibly (p)ppGpp with moderate affinity, with high nucleotide exchange rates and a fairly low GTP hydrolysis rate. Plays a role in control of the cell cycle, stress response, ribosome biogenesis and in those bacteria that undergo differentiation, in morphogenesis control. The protein is GTPase Obg of Halothermothrix orenii (strain H 168 / OCM 544 / DSM 9562).